A 173-amino-acid chain; its full sequence is Sialic acid TRAP transporter small permease protein SiaQ (173 aa).

4 helical membrane-spanning segments follow: residues 13 to 33 (IEEI…TWQI), 46 to 66 (SEEL…AIAI), 87 to 107 (LSLV…IIVL), and 123 to 143 (LGIS…FMVF).

This sequence belongs to the TRAP transporter small permease family. The complex comprises the extracytoplasmic solute receptor protein SiaP, and the two transmembrane proteins SiaQ and SiaM. SiaQ and SiaM form a tight 1:1 complex.

It localises to the cell inner membrane. Its function is as follows. Part of the tripartite ATP-independent periplasmic (TRAP) transport system SiaPQM that catalyzes unidirectional Na(+)-dependent sialic acid uptake. The polypeptide is Sialic acid TRAP transporter small permease protein SiaQ (Vibrio cholerae serotype O1 (strain ATCC 39315 / El Tor Inaba N16961)).